The primary structure comprises 447 residues: MTRKLFGTDGVRGTANTHPMTAEMALRLGAAAGRYFRPVGAGSPRVVIGKDTRLSGYMLENALTAGLTSTGMNVLLLGPVPTPAVGFLTRSMRAALGVMISASHNPHEDNGIKFFGPDGFKLSDEAEAEIEAILAGEIQPAQPGNIGRAKRIEDGRGRYQEYCKTTFPSGLRLDGLKVVIDCANGAAYRAAPEVLWELGAEVIPVGVEPNGKNINLRCGSTHPQAAGEAVRAHGADVGICLDGDADRVIILDETGKEADGDQIMALFAARWADEGRLRDGTLVATVMSNLGLERFLGARGLRLERTPVGDRYVVEAMRRGGWNLGGEQSGHIVMTDFATTGDGLLAGLQFLAAMAQTGRRASDLARSFETVPQLLQNVRYAAGQEPLKAPGVQAVIRDAEVRLNGAGRLLIRKSGTEPLIRVMAECEDEALLRDVVEEIVAAVRDAA.

Ser103 serves as the catalytic Phosphoserine intermediate. Ser103, Asp242, Asp244, and Asp246 together coordinate Mg(2+). The residue at position 103 (Ser103) is a Phosphoserine.

It belongs to the phosphohexose mutase family. It depends on Mg(2+) as a cofactor. In terms of processing, activated by phosphorylation.

It catalyses the reaction alpha-D-glucosamine 1-phosphate = D-glucosamine 6-phosphate. In terms of biological role, catalyzes the conversion of glucosamine-6-phosphate to glucosamine-1-phosphate. This chain is Phosphoglucosamine mutase, found in Cereibacter sphaeroides (strain ATCC 17023 / DSM 158 / JCM 6121 / CCUG 31486 / LMG 2827 / NBRC 12203 / NCIMB 8253 / ATH 2.4.1.) (Rhodobacter sphaeroides).